A 152-amino-acid polypeptide reads, in one-letter code: Deoxyuridine 5'-triphosphate nucleotidohydrolase (152 aa).

Residues 72–74 (RSG), N85, and 89–91 (TVD) contribute to the substrate site.

It belongs to the dUTPase family. It depends on Mg(2+) as a cofactor.

The catalysed reaction is dUTP + H2O = dUMP + diphosphate + H(+). It functions in the pathway pyrimidine metabolism; dUMP biosynthesis; dUMP from dCTP (dUTP route): step 2/2. Functionally, this enzyme is involved in nucleotide metabolism: it produces dUMP, the immediate precursor of thymidine nucleotides and it decreases the intracellular concentration of dUTP so that uracil cannot be incorporated into DNA. The polypeptide is Deoxyuridine 5'-triphosphate nucleotidohydrolase (Nitrobacter winogradskyi (strain ATCC 25391 / DSM 10237 / CIP 104748 / NCIMB 11846 / Nb-255)).